Here is a 192-residue protein sequence, read N- to C-terminus: Glycerol-3-phosphate acyltransferase (192 aa).

Helical transmembrane passes span 4-24 (MFWL…AILL), 54-74 (LAIL…LIAS), 80-100 (IAQQ…PVYF), 112-132 (AGVL…AWLL), and 154-174 (LLAW…LLIV).

It belongs to the PlsY family. In terms of assembly, probably interacts with PlsX.

It is found in the cell inner membrane. The catalysed reaction is an acyl phosphate + sn-glycerol 3-phosphate = a 1-acyl-sn-glycero-3-phosphate + phosphate. It participates in lipid metabolism; phospholipid metabolism. In terms of biological role, catalyzes the transfer of an acyl group from acyl-phosphate (acyl-PO(4)) to glycerol-3-phosphate (G3P) to form lysophosphatidic acid (LPA). This enzyme utilizes acyl-phosphate as fatty acyl donor, but not acyl-CoA or acyl-ACP. The chain is Glycerol-3-phosphate acyltransferase from Pseudomonas savastanoi pv. phaseolicola (strain 1448A / Race 6) (Pseudomonas syringae pv. phaseolicola (strain 1448A / Race 6)).